We begin with the raw amino-acid sequence, 156 residues long: uncharacterized protein (156 aa).

Disordered regions lie at residues 22 to 64 and 81 to 156; these read KERV…VLKK and AARA…DENE. Residues 43–56 show a composition bias toward acidic residues; it reads PEEDGDHSDKEDEQ. S50 carries the phosphoserine modification. N6-acetyllysine is present on K108. Residues 121–134 show a composition bias toward basic and acidic residues; that stretch reads TKEEDEINKQDSVK. Position 148 is a phosphoserine (S148).

This is an uncharacterized protein from Bos taurus (Bovine).